The chain runs to 623 residues: Dynein axonemal intermediate chain 2 (623 aa).

WD repeat units lie at residues 214–254 (KPLS…LVAE), 261–302 (SHRD…EPIE), 362–401 (GHHG…SSIM), 405–445 (YHMA…CDPA), and 450–489 (VCDD…STLQ). A disordered region spans residues 565–602 (AEALKKKPKPRKKSSVKVEAEEEVEENVGEEEEAGGII). The span at 570 to 579 (KKPKPRKKSS) shows a compositional bias: basic residues. Residues 584-598 (AEEEVEENVGEEEEA) show a composition bias toward acidic residues.

The protein belongs to the dynein intermediate chain family. Consists of at least two heavy chains and a number of intermediate and light chains. Interacts with DNAAF2. Interacts with DNAAF6/PIH1D3. Interacts with HEATR2; probably involved in outer arm dynein assembly. Interacts with CFAP53. As to expression, predominantly expressed in ovary, testis and lung.

Its subcellular location is the cytoplasm. It localises to the cytoskeleton. The protein resides in the cilium axoneme. The protein localises to the dynein axonemal particle. In terms of biological role, part of the dynein complex of respiratory cilia. The sequence is that of Dynein axonemal intermediate chain 2 (Dnai2) from Mus musculus (Mouse).